The following is a 25-amino-acid chain: Caerin-1.3 (25 aa).

Leucine 25 bears the Leucine amide mark.

As to expression, expressed by the skin parotoid and/or rostral glands.

It localises to the secreted. Functionally, antibacterial peptide, that adopts an alpha helical conformation which can disrupt bacterial membranes. Each caerin displays a different antimicrobial specificity. This is Caerin-1.3 from Ranoidea caerulea (Green tree frog).